Here is a 393-residue protein sequence, read N- to C-terminus: Phosphoglycerate kinase (393 aa).

Substrate is bound by residues 21–23 (DLN), R36, 59–62 (HLGR), R113, and R146. Residues K197, E319, and 345-348 (GGDT) each bind ATP.

The protein belongs to the phosphoglycerate kinase family. In terms of assembly, monomer.

It localises to the cytoplasm. It catalyses the reaction (2R)-3-phosphoglycerate + ATP = (2R)-3-phospho-glyceroyl phosphate + ADP. Its pathway is carbohydrate degradation; glycolysis; pyruvate from D-glyceraldehyde 3-phosphate: step 2/5. The sequence is that of Phosphoglycerate kinase from Nitratidesulfovibrio vulgaris (strain DP4) (Desulfovibrio vulgaris).